Consider the following 682-residue polypeptide: Tail-specific protease (682 aa).

The N-terminal stretch at methionine 1–alanine 22 is a signal peptide. Positions asparagine 238–alanine 322 constitute a PDZ domain. Catalysis depends on charge relay system residues serine 452, aspartate 463, and lysine 477.

It belongs to the peptidase S41A family.

Its subcellular location is the cell inner membrane. It catalyses the reaction The enzyme shows specific recognition of a C-terminal tripeptide, Xaa-Yaa-Zaa, in which Xaa is preferably Ala or Leu, Yaa is preferably Ala or Tyr, and Zaa is preferably Ala, but then cleaves at a variable distance from the C-terminus. A typical cleavage is -Ala-Ala-|-Arg-Ala-Ala-Lys-Glu-Asn-Tyr-Ala-Leu-Ala-Ala.. In terms of biological role, involved in the cleavage of a C-terminal peptide of 11 residues from the precursor form of penicillin-binding protein 3 (PBP3). May be involved in protection of the bacterium from thermal and osmotic stresses. The polypeptide is Tail-specific protease (prc) (Salmonella typhimurium (strain LT2 / SGSC1412 / ATCC 700720)).